The chain runs to 79 residues: Protein FAM236A (79 aa).

Belongs to the FAM236 family.

This is Protein FAM236A from Homo sapiens (Human).